The chain runs to 174 residues: Large ribosomal subunit protein uL10 (174 aa).

Belongs to the universal ribosomal protein uL10 family. As to quaternary structure, part of the ribosomal stalk of the 50S ribosomal subunit. The N-terminus interacts with L11 and the large rRNA to form the base of the stalk. The C-terminus forms an elongated spine to which L12 dimers bind in a sequential fashion forming a multimeric L10(L12)X complex.

In terms of biological role, forms part of the ribosomal stalk, playing a central role in the interaction of the ribosome with GTP-bound translation factors. The chain is Large ribosomal subunit protein uL10 from Acidiphilium cryptum (strain JF-5).